A 56-amino-acid polypeptide reads, in one-letter code: Large ribosomal subunit protein bL33 (56 aa).

Over residues M1–L12 the composition is skewed to basic and acidic residues. The disordered stretch occupies residues M1–N27.

This sequence belongs to the bacterial ribosomal protein bL33 family.

In Leptothrix cholodnii (strain ATCC 51168 / LMG 8142 / SP-6) (Leptothrix discophora (strain SP-6)), this protein is Large ribosomal subunit protein bL33.